The sequence spans 129 residues: Fluoride-specific ion channel FluC (129 aa).

The next 3 helical transmembrane spans lie at 20-40 (WFLG…TLAA), 67-87 (LLII…TAEI), and 96-116 (IMTA…MMLL). 2 residues coordinate Na(+): Gly75 and Thr78.

Belongs to the fluoride channel Fluc/FEX (TC 1.A.43) family.

It is found in the cell inner membrane. The catalysed reaction is fluoride(in) = fluoride(out). Na(+) is not transported, but it plays an essential structural role and its presence is essential for fluoride channel function. Its function is as follows. Fluoride-specific ion channel. Important for reducing fluoride concentration in the cell, thus reducing its toxicity. The protein is Fluoride-specific ion channel FluC of Desulfovibrio desulfuricans (strain ATCC 27774 / DSM 6949 / MB).